Consider the following 468-residue polypeptide: Gasdermin-C (468 aa).

Positions Met1–Lys230 are triggers pyroptosis.

Belongs to the gasdermin family. As to quaternary structure, homooligomer; homooligomeric ring-shaped pore complex containing 27-28 subunits when inserted in the membrane. Post-translationally, cleavage by CASP8 relieves autoinhibition by releasing the N-terminal moiety (Gasdermin-C, N-terminal) that initiates pyroptosis. Palmitoylated.

The protein resides in the cytoplasm. The protein localises to the cytosol. It is found in the cell membrane. The full-length protein before cleavage is inactive: intramolecular interactions between N- and C-terminal domains mediate autoinhibition in the absence of activation signal. The intrinsic pyroptosis-inducing activity is carried by the released N-terminal moiety (Gasdermin-C, N-terminal) following cleavage by caspase CASP8. In terms of biological role, this form constitutes the precursor of the pore-forming protein: upon cleavage, the released N-terminal moiety (Gasdermin-C, N-terminal) binds to membranes and forms pores, triggering pyroptosis. Functionally, pore-forming protein that causes membrane permeabilization and pyroptosis. Produced by the cleavage of gasdermin-C by caspase CASP8 in response to death signals. After cleavage, moves to the plasma membrane where it strongly binds to membrane inner leaflet lipids. Homooligomerizes within the membrane and forms pores of 10-15 nanometers (nm) of inner diameter, triggering pyroptosis. The protein is Gasdermin-C of Mus musculus (Mouse).